The sequence spans 226 residues: DNA mismatch repair protein MutH (226 aa).

This sequence belongs to the MutH family.

The protein localises to the cytoplasm. Sequence-specific endonuclease that cleaves unmethylated GATC sequences. It is involved in DNA mismatch repair. This Actinobacillus pleuropneumoniae serotype 3 (strain JL03) protein is DNA mismatch repair protein MutH.